Reading from the N-terminus, the 142-residue chain is Hemoglobin subunit alpha (142 aa).

In terms of domain architecture, Globin spans 2-142 (VLSPADKSNV…VSTVLTSKYR (141 aa)). Phosphoserine is present on S4. K8 and K12 each carry N6-succinyllysine. Residue K17 is modified to N6-acetyllysine; alternate. At K17 the chain carries N6-succinyllysine; alternate. The residue at position 25 (Y25) is a Phosphotyrosine. Position 36 is a phosphoserine (S36). K41 carries the post-translational modification N6-succinyllysine. The residue at position 50 (S50) is a Phosphoserine. Position 59 (H59) interacts with O2. Residue H88 participates in heme b binding. S103 is modified (phosphoserine). Residue T109 is modified to Phosphothreonine. S125 bears the Phosphoserine mark. Phosphothreonine is present on residues T135 and T138. At S139 the chain carries Phosphoserine.

It belongs to the globin family. In terms of assembly, heterotetramer of two alpha chains and two beta chains. Red blood cells.

Involved in oxygen transport from the lung to the various peripheral tissues. Its function is as follows. Hemopressin acts as an antagonist peptide of the cannabinoid receptor CNR1. Hemopressin-binding efficiently blocks cannabinoid receptor CNR1 and subsequent signaling. This Ursus maritimus (Polar bear) protein is Hemoglobin subunit alpha (HBA).